The following is a 280-amino-acid chain: Urease accessory protein UreD 1 (280 aa).

This sequence belongs to the UreD family. As to quaternary structure, ureD, UreF and UreG form a complex that acts as a GTP-hydrolysis-dependent molecular chaperone, activating the urease apoprotein by helping to assemble the nickel containing metallocenter of UreC. The UreE protein probably delivers the nickel.

It is found in the cytoplasm. In terms of biological role, required for maturation of urease via the functional incorporation of the urease nickel metallocenter. This chain is Urease accessory protein UreD 1, found in Bradyrhizobium sp. (strain BTAi1 / ATCC BAA-1182).